A 198-amino-acid chain; its full sequence is MLYPTPIAKLIDSFSKLPGIGIKTATRLAFYTIGMSDDDVNEFAKNLLAAKRELSYCSICGNLTDEDPCAICRDESRDQSTILIVEDSRDVSAMENIQEYHGLYHVLHGLISPMNGVGPDDINLKSLITRLMDSEVSEVIVATNATADGEATSMYISRVLKPAGIKVTRLARGLAVGSDIEYADEVTLIRAIENRTEL.

The C4-type zinc finger occupies 57–72; the sequence is CSICGNLTDEDPCAIC. A Toprim domain is found at 80–175; sequence STILIVEDSR…KVTRLARGLA (96 aa).

The protein belongs to the RecR family.

May play a role in DNA repair. It seems to be involved in an RecBC-independent recombinational process of DNA repair. It may act with RecF and RecO. In Streptococcus gordonii (strain Challis / ATCC 35105 / BCRC 15272 / CH1 / DL1 / V288), this protein is Recombination protein RecR.